Consider the following 105-residue polypeptide: Vacuolar ATPase assembly integral membrane protein VMA21 homolog (105 aa).

The disordered stretch occupies residues 1 to 26; it reads MSTKNKKAAGGNGGAPKQTRQQSHDS. The Cytoplasmic segment spans residues 1–36; that stretch reads MSTKNKKAAGGNGGAPKQTRQQSHDSQDYSSFKTVL. A helical transmembrane segment spans residues 37–57; it reads FYCMLIVFLPVLTFFVLKGFV. At 58-68 the chain is on the lumenal side; that stretch reads LDQFLDISEVK. Residues 69 to 89 traverse the membrane as a helical segment; that stretch reads VNIASAVGAVVALHIALGLYI. At 90–105 the chain is on the cytoplasmic side; the sequence is YRAYFGAPGSKGSKTD.

This sequence belongs to the VMA21 family.

The protein resides in the endoplasmic reticulum membrane. It is found in the endoplasmic reticulum-Golgi intermediate compartment membrane. Its subcellular location is the cytoplasmic vesicle. The protein localises to the COPII-coated vesicle membrane. Required for the assembly of the V0 complex of the vacuolar ATPase (V-ATPase) in the endoplasmic reticulum. The chain is Vacuolar ATPase assembly integral membrane protein VMA21 homolog from Drosophila simulans (Fruit fly).